The sequence spans 424 residues: O-methyltransferase aunD (424 aa).

S-adenosyl-L-methionine is bound at residue Asp275. The active-site Proton acceptor is His326.

This sequence belongs to the class I-like SAM-binding methyltransferase superfamily. Cation-independent O-methyltransferase family.

The protein operates within secondary metabolite biosynthesis. In terms of biological role, O-methyltransferase; part of the gene cluster that mediates the biosynthesis of aurasperone B, a dimeric gamma-naphthopyrone. The first step in the biosynthesis of aurasperone B is the production of gamma-naphthopyrone precursor YWA1 by the non-reducing polyketide synthase albA, via condensation of one acetyl-CoA starter unit with 6 malonyl-CoA units. YWA1 is then methylated by aunE at position C-6 to yield foncesin which is further methylated at position C-8 by aunD to produce fonsecin B. A key enzyme in the biosynthetic pathway is the cytochrome P450 monooxygenase aunB which catalyzes the oxidative dimerization of fonsecin B to aurasperone B. AunB also catalyzes the oxidative dimerization of rubrofusarin B into aurasperone A. The protein is O-methyltransferase aunD of Aspergillus niger (strain ATCC 1015 / CBS 113.46 / FGSC A1144 / LSHB Ac4 / NCTC 3858a / NRRL 328 / USDA 3528.7).